The primary structure comprises 123 residues: Small ribosomal subunit protein uS8 (123 aa).

This sequence belongs to the universal ribosomal protein uS8 family. In terms of assembly, part of the 30S ribosomal subunit. Contacts proteins S5 and S12.

Its function is as follows. One of the primary rRNA binding proteins, it binds directly to 16S rRNA central domain where it helps coordinate assembly of the platform of the 30S subunit. In Carsonella ruddii (strain PV), this protein is Small ribosomal subunit protein uS8 (rpsH).